The sequence spans 602 residues: Elongation factor 4 (602 aa).

The 183-residue stretch at 7–189 (RNIRNFSIIA…AIVQRIPAPQ (183 aa)) folds into the tr-type G domain. Residues 19-24 (DHGKST) and 136-139 (NKID) contribute to the GTP site.

Belongs to the TRAFAC class translation factor GTPase superfamily. Classic translation factor GTPase family. LepA subfamily.

The protein localises to the cell inner membrane. The enzyme catalyses GTP + H2O = GDP + phosphate + H(+). Its function is as follows. Required for accurate and efficient protein synthesis under certain stress conditions. May act as a fidelity factor of the translation reaction, by catalyzing a one-codon backward translocation of tRNAs on improperly translocated ribosomes. Back-translocation proceeds from a post-translocation (POST) complex to a pre-translocation (PRE) complex, thus giving elongation factor G a second chance to translocate the tRNAs correctly. Binds to ribosomes in a GTP-dependent manner. The protein is Elongation factor 4 of Xylella fastidiosa (strain 9a5c).